Consider the following 92-residue polypeptide: Phospholemman (92 aa).

A signal peptide spans 1–20 (MASLSHILVLCVGLLAMVNA). Residues 21-35 (EAPQEHDPFTYDYQS) lie on the Extracellular side of the membrane. A helical transmembrane segment spans residues 36 to 56 (LRIGGLIIAGILFILGILIVL). The Cytoplasmic portion of the chain corresponds to 57 to 92 (SRRCRCKFNQQQRTGEPDEEEGTFRSSIRRLSTRRR). A lipid anchor (S-palmitoyl cysteine) is attached at Cys60. Cys62 is modified (S-glutathionyl cysteine; alternate). Cys62 is lipidated: S-palmitoyl cysteine; alternate. The interval 65 to 92 (NQQQRTGEPDEEEGTFRSSIRRLSTRRR) is disordered. Thr79 is subject to Phosphothreonine. The residue at position 82 (Ser82) is a Phosphoserine. Ser83 carries the phosphoserine; by PKA and PKC modification. The span at 83-92 (SIRRLSTRRR) shows a compositional bias: basic residues. Ser88 bears the Phosphoserine; by PKA mark. Phosphothreonine; by PKC is present on Thr89.

This sequence belongs to the FXYD family. As to quaternary structure, homotetramer. Monomer. Regulatory subunit of the sodium/potassium-transporting ATPase (NKA) which is composed of a catalytic alpha subunit, an auxiliary non-catalytic beta subunit and an additional regulatory subunit. The monomeric form associates with NKA while the oligomeric form does not. Interacts with the catalytic alpha-1 subunit ATP1A1. Also interacts with the catalytic alpha-2 and alpha-3 subunits ATP1A2 and ATP1A3. Very little interaction with ATP1A1, ATP1A2 or ATP1A3 when phosphorylated at Ser-83. Interacts with the non-catalytic beta-1 subunit ATP1B1. Oxidative stress decreases interaction with ATP1A1 but increases interaction with ATP1B1. Major plasma membrane substrate for cAMP-dependent protein kinase (PKA) and protein kinase C (PKC) in several different tissues. Phosphorylated in response to insulin and adrenergic stimulation. Phosphorylation at Ser-88 stimulates sodium/potassium-transporting ATPase activity while the unphosphorylated form inhibits sodium/potassium-transporting ATPase activity. Phosphorylation increases tetramerization, decreases binding to ATP1A1 and reduces inhibition of ATP1A1 activity. Phosphorylation at Ser-83 leads to greatly reduced interaction with ATP1A1, ATP1A2 and ATP1A3. May be phosphorylated by DMPK. In terms of processing, palmitoylation increases half-life and stability and is enhanced upon phosphorylation at Ser-88 by PKA. In the brain, detected in cerebellum and choroid plexus (at protein level).

It localises to the cell membrane. Its subcellular location is the sarcolemma. The protein resides in the apical cell membrane. It is found in the membrane. The protein localises to the caveola. It localises to the T-tubule. Functionally, associates with and regulates the activity of the sodium/potassium-transporting ATPase (NKA) which transports Na(+) out of the cell and K(+) into the cell. Inhibits NKA activity in its unphosphorylated state and stimulates activity when phosphorylated. Reduces glutathionylation of the NKA beta-1 subunit ATP1B1, thus reversing glutathionylation-mediated inhibition of ATP1B1. Contributes to female sexual development by maintaining the excitability of neurons which secrete gonadotropin-releasing hormone. This chain is Phospholemman, found in Bos taurus (Bovine).